We begin with the raw amino-acid sequence, 462 residues long: Centrosomal protein of 55 kDa (462 aa).

Basic and acidic residues predominate over residues 1 to 11; the sequence is MSSRSPKDLIK. Positions 1 to 26 are disordered; sequence MSSRSPKDLIKSKWGSRPSSSKSDTA. A compositionally biased stretch (low complexity) spans 12–23; sequence SKWGSRPSSSKS. Positions 50–400 form a coiled coil; the sequence is KMAEKGRSRL…TQLESLKQLH (351 aa). 2 positions are modified to phosphoserine: S96 and S99. Residues 157 to 235 form an interaction with TSG101 region; it reads ANCFNSSMNS…EGYLQVEKQK (79 aa). The tract at residues 160–214 is interaction with PDCD6IP; it reads FNSSMNSIHEKEMQLKDALEKNQQWLVYDQQREAYVKGLLAKIFELEKRTETAAA. Residues 354–462 form a required for localization to the interphase centrosome and to the midbody during cytokinesis region; it reads QMQACTLDFE…LLVHVEYCMK (109 aa). A disordered region spans residues 410–430; that stretch reads PLQREPESRVKATSPKSPSAA. A phosphoserine mark is found at S423, S426, and S428. S434 bears the Phosphoserine; by PLK1 mark.

As to quaternary structure, homodimer. Interacts (phosphorylated on Ser-423 and Ser-426) with PLK1; the interaction is indirect via the MTMR3:MTMR4 heterooligomer, occurs during early mitosis, regulates the phosphorylation of CEP55 by PLK1 and its recruitment to the midbody where it can mediate cell abscission. Interacts with AKAP9/CG-NAP; the interaction occurs in interphase and is lost upon mitotic entry. Interacts with PCNT/Kendrin; the interaction occurs in interphase and is lost upon mitotic entry. Directly interacts with PDCD6IP; this interaction is required for PDCD6IP targeting to the midbody; CEP55 binds PDCD6IP in a 2:1 stoichiometry; PDCD6IP competes with TSG101 for the same binding site. Interacts with TSG101; TSG101 competes with PDCD6IP for the same binding site; interaction is required for cytokinesis. Interacts with MVB12A, VPS37B, VPS37C and VPS28. There is a hierachy of phosphorylation, where both Ser-423 and Ser-426 are phosphorylated at the onset of mitosis, prior to Ser-434. Phosphorylation at Ser-423 and Ser-426 is required for dissociation from the centrosome at the G2/M boundary. Phosphorylation at the 3 sites, Ser-423, Ser-426 and Ser-434, is required for protein function at the final stages of cell division to complete cytokinesis successfully.

It is found in the cytoplasm. The protein localises to the cytoskeleton. The protein resides in the microtubule organizing center. Its subcellular location is the centrosome. It localises to the centriole. It is found in the cleavage furrow. The protein localises to the midbody. The protein resides in the midbody ring. Functionally, plays a role in mitotic exit and cytokinesis. Recruits PDCD6IP and TSG101 to midbody during cytokinesis. Required for successful completion of cytokinesis. Not required for microtubule nucleation. Plays a role in the development of the brain and kidney. In Mus musculus (Mouse), this protein is Centrosomal protein of 55 kDa.